The chain runs to 228 residues: Vesicle transport protein SEC20 (228 aa).

At 1-199 the chain is on the cytoplasmic side; it reads MAAPQDVHVR…LITKYNRREL (199 aa). Positions 37-90 form a coiled coil; the sequence is LSALTELNTKVKEKFQQLRHRIQDLEQLAKEQDKESEKQLLLQEVENHKKQMLS. Residues 200 to 220 form a helical; Anchor for type IV membrane protein membrane-spanning segment; that stretch reads TDKLLIFLALALFLATVLYIV. At 221–228 the chain is on the lumenal side; sequence KKRLFPFL.

Belongs to the SEC20 family. Component of a SNARE complex consisting of STX18, USE1L, BNIP1/SEC20L and SEC22B. Interacts directly with STX18, RINT1/TIP20L and NAPA. Interacts with ZW10 through RINT1. Interacts with BCL2. Interacts with RNF186. Interacts with RNF185. Interacts with SQSTM1; increased by 'Lys-63'-linked polyubiquitination of BNIP1. In terms of assembly, (Microbial infection) Interacts with adenovirus E1B 19K protein; plays a role in the suppression of cell apoptosis by the viral protein. Polyubiquitinated. 'Lys-63'-linked polyubiquitination by RNF185 increases the interaction with the autophagy receptor SQSTM1. Undergoes 'Lys-29'- and 'Lys-63'-linked polyubiquitination by RNF186 that may regulate BNIP1 localization to the mitochondrion. As to expression, isoform 1 is highly expressed in heart, brain, liver skeletal muscle and pancreas. Isoform 3 is moderately expressed in placenta, lung and kidney. Isoform 4 is highly expressed in testis and small intestine.

It localises to the endoplasmic reticulum membrane. The protein resides in the mitochondrion membrane. Functionally, as part of a SNARE complex may be involved in endoplasmic reticulum membranes fusion and be required for the maintenance of endoplasmic reticulum organization. Also plays a role in apoptosis. It is for instance required for endoplasmic reticulum stress-induced apoptosis. As a substrate of RNF185 interacting with SQSTM1, might also be involved in mitochondrial autophagy. This is Vesicle transport protein SEC20 (BNIP1) from Homo sapiens (Human).